Here is a 129-residue protein sequence, read N- to C-terminus: Thioredoxin-like 3-3 (129 aa).

The segment covering 1–10 (MEEGEAKKTG) has biased composition (basic and acidic residues). Positions 1 to 30 (MEEGEAKKTGLEGTGLSLPGSSHGNLRSAG) are disordered. The 123-residue stretch at 7–129 (KKTGLEGTGL…RLHDRLWLHS (123 aa)) folds into the Thioredoxin domain. Over residues 19-30 (PGSSHGNLRSAG) the composition is skewed to polar residues. Residues cysteine 58 and cysteine 61 each act as nucleophile in the active site. Cysteines 58 and 61 form a disulfide.

This sequence belongs to the thioredoxin family.

Probable thiol-disulfide oxidoreductase that may participate in various redox reactions. The polypeptide is Thioredoxin-like 3-3 (Oryza sativa subsp. japonica (Rice)).